Reading from the N-terminus, the 408-residue chain is Peptidoglycan muramidase Tse3 (408 aa).

Positions 181, 253, 254, 258, 375, 378, 379, 382, and 384 each coordinate Ca(2+).

In terms of assembly, forms a heterotetramer with Tsi3 consisting of two Tse3 dimers and two Tsi3 dimers. Formation of the complex inactivates Tse3 enzymatic activity. Ca(2+) serves as cofactor.

It is found in the host membrane. The protein resides in the secreted. It catalyses the reaction Hydrolysis of (1-&gt;4)-beta-linkages between N-acetylmuramic acid and N-acetyl-D-glucosamine residues in a peptidoglycan and between N-acetyl-D-glucosamine residues in chitodextrins.. Enzymatic activity depends on membrane binding. Toxin secreted by the H1 type VI (H1-T6SS) secretion system into the periplasm of recipient cells. Degrades peptidoglycan via muramidase activity thereby helping itself to compete with other bacteria. To protect itself, the bacterium synthesizes immunity protein Tsi3 that specifically interacts with and inactivates cognate toxin. This is Peptidoglycan muramidase Tse3 from Pseudomonas aeruginosa (strain ATCC 15692 / DSM 22644 / CIP 104116 / JCM 14847 / LMG 12228 / 1C / PRS 101 / PAO1).